Reading from the N-terminus, the 234-residue chain is 1-(5-phosphoribosyl)-5-[(5-phosphoribosylamino)methylideneamino] imidazole-4-carboxamide isomerase (234 aa).

Catalysis depends on D9, which acts as the Proton acceptor. Catalysis depends on D131, which acts as the Proton donor.

It belongs to the HisA/HisF family.

The protein resides in the cytoplasm. The catalysed reaction is 1-(5-phospho-beta-D-ribosyl)-5-[(5-phospho-beta-D-ribosylamino)methylideneamino]imidazole-4-carboxamide = 5-[(5-phospho-1-deoxy-D-ribulos-1-ylimino)methylamino]-1-(5-phospho-beta-D-ribosyl)imidazole-4-carboxamide. It functions in the pathway amino-acid biosynthesis; L-histidine biosynthesis; L-histidine from 5-phospho-alpha-D-ribose 1-diphosphate: step 4/9. This Staphylococcus aureus (strain JH1) protein is 1-(5-phosphoribosyl)-5-[(5-phosphoribosylamino)methylideneamino] imidazole-4-carboxamide isomerase.